We begin with the raw amino-acid sequence, 416 residues long: Caspase-9 (416 aa).

In terms of domain architecture, CARD spans 1–92 (MDEADRRLLR…DMLASFLRTN (92 aa)). Position 125 is a phosphothreonine; by MAPK1 (Thr-125). Tyr-153 is modified (phosphotyrosine; by ABL1). Residues His-237 and Cys-287 contribute to the active site. The segment at 294 to 320 (HGFEVASTSPEDESPGSNPEPDATPFQ) is disordered. Phosphoserine occurs at positions 302, 307, and 310. Residues 316 to 330 (ATPFQEGLRTFDQLD) constitute a propeptide that is removed on maturation. A (Microbial infection) ADP-riboxanated arginine modification is found at Arg-355.

It belongs to the peptidase C14A family. Heterotetramer that consists of two anti-parallel arranged heterodimers, each one formed by a 35 kDa (p35) and a 10 kDa (p10) subunit. Caspase-9 and APAF1 bind to each other via their respective NH2-terminal CED-3 homologous domains in the presence of cytochrome C and ATP. Interacts (inactive form) with EFHD2. Interacts with HAX1. Interacts with BIRC2/c-IAP1, XIAP/BIRC4, BIRC5/survivin, BIRC6/bruce and BIRC7/livin. Interacts with ABL1 (via SH3 domain); the interaction is direct and increases in the response of cells to genotoxic stress and ABL1/c-Abl activation. Interacts with BCL2L10. Interacts with NleF from pathogenic E.coli. In terms of processing, cleavages at Asp-315 by granzyme B and at Asp-330 by caspase-3 generate the two active subunits. Caspase-8 and -10 can also be involved in these processing events. Post-translationally, phosphorylated at Thr-125 by MAPK1/ERK2. Phosphorylation at Thr-125 is sufficient to block caspase-9 processing and subsequent caspase-3 activation. Phosphorylation on Tyr-153 by ABL1/c-Abl; occurs in the response of cells to DNA damage. (Microbial infection) ADP-riboxanation by C.violaceum CopC blocks CASP9 processing, preventing CASP9 activation and ability to mediate intrinsic apoptosis. In terms of processing, ubiquitinated by BIRC6; this activity is inhibited by DIABLO/SMAC. In terms of tissue distribution, ubiquitous, with highest expression in the heart, moderate expression in liver, skeletal muscle, and pancreas. Low levels in all other tissues. Within the heart, specifically expressed in myocytes.

The catalysed reaction is Strict requirement for an Asp residue at position P1 and with a marked preference for His at position P2. It has a preferred cleavage sequence of Leu-Gly-His-Asp-|-Xaa.. Inhibited by the effector protein NleF that is produced by pathogenic E.coli; this inhibits apoptosis. Inhibited by BIRC6; following inhibition of BIRC6-caspase binding by DIABLO/SMAC, BIRC6 is subjected to caspase cleavage, leading to an increase in active caspases. In terms of biological role, involved in the activation cascade of caspases responsible for apoptosis execution. Binding of caspase-9 to Apaf-1 leads to activation of the protease which then cleaves and activates effector caspases caspase-3 (CASP3) or caspase-7 (CASP7). Promotes DNA damage-induced apoptosis in a ABL1/c-Abl-dependent manner. Proteolytically cleaves poly(ADP-ribose) polymerase (PARP). Cleaves BIRC6 following inhibition of BIRC6-caspase binding by DIABLO/SMAC. Lacks activity is an dominant-negative inhibitor of caspase-9. The chain is Caspase-9 (CASP9) from Homo sapiens (Human).